Reading from the N-terminus, the 207-residue chain is Large ribosomal subunit protein uL3c (207 aa).

A disordered region spans residues 129–148; it reads TRGPMTHGSKNHRAPGSIGM.

It belongs to the universal ribosomal protein uL3 family. As to quaternary structure, part of the 50S ribosomal subunit.

It localises to the plastid. The protein localises to the chloroplast. Its function is as follows. One of the primary rRNA binding proteins, it binds directly near the 3'-end of the 23S rRNA, where it nucleates assembly of the 50S subunit. The sequence is that of Large ribosomal subunit protein uL3c (rpl3) from Phaeodactylum tricornutum (strain CCAP 1055/1).